A 107-amino-acid polypeptide reads, in one-letter code: MNAHKTAQNMSQEALYDVVRAPLITEKATLLSERNQVVFKVAPSATKPQIKAAVEKLFNVKVTGVNTLVQKGKVKRVKGRPGRRSDIKKAYVQLAEGQSIDLTAKLG.

The protein belongs to the universal ribosomal protein uL23 family. In terms of assembly, part of the 50S ribosomal subunit. Contacts protein L29, and trigger factor when it is bound to the ribosome.

In terms of biological role, one of the early assembly proteins it binds 23S rRNA. One of the proteins that surrounds the polypeptide exit tunnel on the outside of the ribosome. Forms the main docking site for trigger factor binding to the ribosome. This Gluconobacter oxydans (strain 621H) (Gluconobacter suboxydans) protein is Large ribosomal subunit protein uL23.